A 312-amino-acid polypeptide reads, in one-letter code: Malate dehydrogenase (312 aa).

Residues 12–17 (GAGFTG) and Asp-36 contribute to the NAD(+) site. Residues Arg-87 and Arg-93 each coordinate substrate. NAD(+)-binding positions include Asn-100 and 123 to 125 (LTN). Asn-125 contacts substrate. Ser-149 is subject to Phosphoserine. Arg-156 contributes to the substrate binding site. Residue His-180 is the Proton acceptor of the active site.

This sequence belongs to the LDH/MDH superfamily. MDH type 3 family.

The enzyme catalyses (S)-malate + NAD(+) = oxaloacetate + NADH + H(+). In terms of biological role, catalyzes the reversible oxidation of malate to oxaloacetate. The chain is Malate dehydrogenase from Geobacillus thermodenitrificans (strain NG80-2).